The chain runs to 267 residues: Acetyl-coenzyme A carboxylase carboxyl transferase subunit beta, chloroplastic (267 aa).

The CoA carboxyltransferase N-terminal domain occupies 12 to 267; sequence LWKKCDSCNI…TIHMILDLHN (256 aa). Zn(2+)-binding residues include cysteine 16, cysteine 19, cysteine 35, and cysteine 38. The C4-type zinc finger occupies 16–38; it reads CDSCNILISKFDFYKHDKVCPEC.

The protein belongs to the AccD/PCCB family. In terms of assembly, acetyl-CoA carboxylase is a heterohexamer composed of biotin carboxyl carrier protein, biotin carboxylase and 2 subunits each of ACCase subunit alpha and ACCase plastid-coded subunit beta (accD). Zn(2+) is required as a cofactor.

Its subcellular location is the plastid. It localises to the chloroplast stroma. The catalysed reaction is N(6)-carboxybiotinyl-L-lysyl-[protein] + acetyl-CoA = N(6)-biotinyl-L-lysyl-[protein] + malonyl-CoA. It participates in lipid metabolism; malonyl-CoA biosynthesis; malonyl-CoA from acetyl-CoA: step 1/1. Its function is as follows. Component of the acetyl coenzyme A carboxylase (ACC) complex. Biotin carboxylase (BC) catalyzes the carboxylation of biotin on its carrier protein (BCCP) and then the CO(2) group is transferred by the transcarboxylase to acetyl-CoA to form malonyl-CoA. In Cyanidium caldarium (Red alga), this protein is Acetyl-coenzyme A carboxylase carboxyl transferase subunit beta, chloroplastic.